The chain runs to 456 residues: Choline kinase (456 aa).

The protein belongs to the choline/ethanolamine kinase family. In terms of assembly, monomer. It depends on Mg(2+) as a cofactor.

It is found in the cytoplasm. The protein resides in the nucleus. It catalyses the reaction choline + ATP = phosphocholine + ADP + H(+). The protein operates within phospholipid metabolism; phosphatidylcholine biosynthesis; phosphocholine from choline: step 1/1. In terms of biological role, catalyzes the committed step in the synthesis of phosphatidylcholine by the CDP-choline pathway. This is Choline kinase from Schizosaccharomyces pombe (strain 972 / ATCC 24843) (Fission yeast).